A 123-amino-acid chain; its full sequence is Small ribosomal subunit protein uS12 (123 aa).

Residues 1 to 28 (MPTIQQLIRKPRQPKVKRSKSMHLEQCP) form a disordered region. Residues 9 to 21 (RKPRQPKVKRSKS) are compositionally biased toward basic residues. A 3-methylthioaspartic acid modification is found at D89.

This sequence belongs to the universal ribosomal protein uS12 family. As to quaternary structure, part of the 30S ribosomal subunit. Contacts proteins S8 and S17. May interact with IF1 in the 30S initiation complex.

Functionally, with S4 and S5 plays an important role in translational accuracy. In terms of biological role, interacts with and stabilizes bases of the 16S rRNA that are involved in tRNA selection in the A site and with the mRNA backbone. Located at the interface of the 30S and 50S subunits, it traverses the body of the 30S subunit contacting proteins on the other side and probably holding the rRNA structure together. The combined cluster of proteins S8, S12 and S17 appears to hold together the shoulder and platform of the 30S subunit. The sequence is that of Small ribosomal subunit protein uS12 from Ruegeria sp. (strain TM1040) (Silicibacter sp.).